Consider the following 208-residue polypeptide: Uracil phosphoribosyltransferase (208 aa).

5-phospho-alpha-D-ribose 1-diphosphate-binding positions include Arg-78, Arg-103, and 130-138; that span reads DPMLATGGS. Uracil is bound by residues Ile-193 and 198 to 200; that span reads GDA. 5-phospho-alpha-D-ribose 1-diphosphate is bound at residue Asp-199.

It belongs to the UPRTase family. Mg(2+) is required as a cofactor.

It carries out the reaction UMP + diphosphate = 5-phospho-alpha-D-ribose 1-diphosphate + uracil. It functions in the pathway pyrimidine metabolism; UMP biosynthesis via salvage pathway; UMP from uracil: step 1/1. Allosterically activated by GTP. In terms of biological role, catalyzes the conversion of uracil and 5-phospho-alpha-D-ribose 1-diphosphate (PRPP) to UMP and diphosphate. This is Uracil phosphoribosyltransferase from Roseiflexus sp. (strain RS-1).